The primary structure comprises 184 residues: Large ribosomal subunit protein uL6 (184 aa).

Belongs to the universal ribosomal protein uL6 family. In terms of assembly, part of the 50S ribosomal subunit.

This protein binds to the 23S rRNA, and is important in its secondary structure. It is located near the subunit interface in the base of the L7/L12 stalk, and near the tRNA binding site of the peptidyltransferase center. The protein is Large ribosomal subunit protein uL6 of Mycoplasma genitalium (strain ATCC 33530 / DSM 19775 / NCTC 10195 / G37) (Mycoplasmoides genitalium).